Here is a 454-residue protein sequence, read N- to C-terminus: Glutamyl-tRNA reductase (454 aa).

Residues 50-53 (TCNR), serine 103, 108-110 (EDQ), and glutamine 114 contribute to the substrate site. Catalysis depends on cysteine 51, which acts as the Nucleophile. An NADP(+)-binding site is contributed by 182–187 (GAGEMG). Positions 407–454 (LFDPNFGGDTPQPDRPDDIPRAAERGDISGDDLPDDVPNHIAEKVSDG) are disordered. Composition is skewed to basic and acidic residues over residues 418 to 434 (QPDR…RGDI) and 443 to 454 (VPNHIAEKVSDG).

This sequence belongs to the glutamyl-tRNA reductase family. As to quaternary structure, homodimer.

It carries out the reaction (S)-4-amino-5-oxopentanoate + tRNA(Glu) + NADP(+) = L-glutamyl-tRNA(Glu) + NADPH + H(+). Its pathway is porphyrin-containing compound metabolism; protoporphyrin-IX biosynthesis; 5-aminolevulinate from L-glutamyl-tRNA(Glu): step 1/2. Functionally, catalyzes the NADPH-dependent reduction of glutamyl-tRNA(Glu) to glutamate 1-semialdehyde (GSA). The polypeptide is Glutamyl-tRNA reductase (Haloquadratum walsbyi (strain DSM 16790 / HBSQ001)).